We begin with the raw amino-acid sequence, 337 residues long: Anthranilate phosphoribosyltransferase (337 aa).

5-phospho-alpha-D-ribose 1-diphosphate contacts are provided by residues Gly-81, 84–85 (GD), Ser-89, 91–94 (NVST), 109–117 (KHGNRAASS), and Ala-121. Gly-81 is a binding site for anthranilate. Ser-93 is a binding site for Mg(2+). An anthranilate-binding site is contributed by Asn-112. Arg-167 contributes to the anthranilate binding site. Residues Asp-226 and Glu-227 each contribute to the Mg(2+) site.

Belongs to the anthranilate phosphoribosyltransferase family. Homodimer. Mg(2+) is required as a cofactor.

The catalysed reaction is N-(5-phospho-beta-D-ribosyl)anthranilate + diphosphate = 5-phospho-alpha-D-ribose 1-diphosphate + anthranilate. It participates in amino-acid biosynthesis; L-tryptophan biosynthesis; L-tryptophan from chorismate: step 2/5. In terms of biological role, catalyzes the transfer of the phosphoribosyl group of 5-phosphorylribose-1-pyrophosphate (PRPP) to anthranilate to yield N-(5'-phosphoribosyl)-anthranilate (PRA). The polypeptide is Anthranilate phosphoribosyltransferase (Methylobacterium nodulans (strain LMG 21967 / CNCM I-2342 / ORS 2060)).